The primary structure comprises 257 residues: Granzyme M (257 aa).

The signal sequence occupies residues 1 to 23 (MEACVSSLLVLALGALSVGSSFG). Residues 24 to 25 (TQ) constitute a propeptide, activation peptide. The 229-residue stretch at 26-254 (IIGGREVIPH…YVSWIRKVTG (229 aa)) folds into the Peptidase S1 domain. The cysteines at positions 51 and 67 are disulfide-linked. Active-site charge relay system residues include His-66 and Asp-111. Cystine bridges form between Cys-145–Cys-213, Cys-176–Cys-192, and Cys-203–Cys-230. N-linked (GlcNAc...) asparagine glycosylation is present at Asn-177. Ser-207 serves as the catalytic Charge relay system.

This sequence belongs to the peptidase S1 family. Granzyme subfamily. In terms of tissue distribution, highly and constitutively expressed in activated natural killer (NK) cells.

The protein resides in the secreted. The protein localises to the cytoplasmic granule. Cleaves peptide substrates after methionine, leucine, and norleucine. Physiological substrates include EZR, alpha-tubulins and the apoptosis inhibitor BIRC5/Survivin. Promotes caspase activation and subsequent apoptosis of target cells. This is Granzyme M (GZMM) from Homo sapiens (Human).